The primary structure comprises 506 residues: Tripartite terminase subunit 3 (506 aa).

Glutamate 128 acts as the For ATPase activity in catalysis. Active-site for nuclease activity residues include aspartate 282, glutamate 354, and aspartate 475.

Belongs to the herpesviridae TRM3 protein family. Interacts with the terminase subunits TRM1 and TRM2. Interacts with portal protein.

It localises to the host nucleus. Functionally, component of the molecular motor that translocates viral genomic DNA in empty capsid during DNA packaging. Forms a tripartite terminase complex together with TRM1 and TRM2 in the host cytoplasm. Once the complex reaches the host nucleus, it interacts with the capsid portal vertex. This portal forms a ring in which genomic DNA is translocated into the capsid. TRM3 carries an RNase H-like nuclease activity that plays an important role for the cleavage of concatemeric viral DNA into unit length genomes. The sequence is that of Tripartite terminase subunit 3 from Amazona oratrix (yellow-headed parrot).